The primary structure comprises 270 residues: uncharacterized protein (270 aa).

The N-terminal stretch at 1-22 (MEYIKKLLCTMSVLLLIIFIGG) is a signal peptide. Residue Cys-23 is the site of N-palmitoyl cysteine attachment. The S-diacylglycerol cysteine moiety is linked to residue Cys-23.

The protein belongs to the staphylococcal tandem lipoprotein family.

The protein resides in the cell membrane. This is an uncharacterized protein from Staphylococcus aureus (strain bovine RF122 / ET3-1).